The sequence spans 345 residues: MGLSIGIVGATGQVGQVMRTLLDERDFPASAVRFFASARSQGRKLAFRGQEIEVEDAETADPSGLDIALFSAGSAMSKVQAPRFAAAGVTVIDNSSAWRKDPDVPLVVSEVNFERDAHRRPKGIIANPNCTTMAAMPVLKVLHDEARLVRLVVSSYQAVSGSGLAGVAELAEQARAVIGGAEQLVYDGGALEFPPPNTYVAPIAFNVVPLAGSLVDDGSGETDEDQKLRFESRKILGIPDLLVSGTCVRVPVFTGHSLSINAEFAQPLSPERARELLDGATGVQLVDVPTPLAAAGVDESLVGRIRRDPGVPDGRGLALFVSGDNLRKGAALNTIQIAELLTADL.

NADP(+) contacts are provided by residues 11-14 and 39-40; these read TGQV and RS. Arginine 99 contributes to the phosphate binding site. Cysteine 130 acts as the Acyl-thioester intermediate in catalysis. Glutamine 157 lines the substrate pocket. 160 to 161 is a binding site for NADP(+); that stretch reads SG. Lysine 227 serves as a coordination point for phosphate. Arginine 249 serves as a coordination point for substrate. The active-site Proton acceptor is the histidine 256. Asparagine 325 contributes to the NADP(+) binding site.

The protein belongs to the aspartate-semialdehyde dehydrogenase family. Homodimer.

It carries out the reaction L-aspartate 4-semialdehyde + phosphate + NADP(+) = 4-phospho-L-aspartate + NADPH + H(+). It functions in the pathway amino-acid biosynthesis; L-lysine biosynthesis via DAP pathway; (S)-tetrahydrodipicolinate from L-aspartate: step 2/4. Its pathway is amino-acid biosynthesis; L-methionine biosynthesis via de novo pathway; L-homoserine from L-aspartate: step 2/3. It participates in amino-acid biosynthesis; L-threonine biosynthesis; L-threonine from L-aspartate: step 2/5. In terms of biological role, catalyzes the NADPH-dependent formation of L-aspartate-semialdehyde (L-ASA) by the reductive dephosphorylation of L-aspartyl-4-phosphate. In Mycobacterium bovis (strain ATCC BAA-935 / AF2122/97), this protein is Aspartate-semialdehyde dehydrogenase.